A 401-amino-acid chain; its full sequence is Multidrug resistance protein MdtA (401 aa).

The first 20 residues, 1-20 (MNQNNKHRTLLFRAALAAIA), serve as a signal peptide directing secretion.

It belongs to the membrane fusion protein (MFP) (TC 8.A.1) family. In terms of assembly, part of a tripartite efflux system composed of MdtA, MdtB and MdtC.

It is found in the cell inner membrane. The chain is Multidrug resistance protein MdtA from Photorhabdus laumondii subsp. laumondii (strain DSM 15139 / CIP 105565 / TT01) (Photorhabdus luminescens subsp. laumondii).